The following is a 194-amino-acid chain: Naphthalene 1,2-dioxygenase system, small oxygenase component (194 aa).

Belongs to the bacterial ring-hydroxylating dioxygenase beta subunit family. The naphthalene dioxygenase (NDO) multicomponent enzyme system is composed of an electron transfer component and a dioxygenase component (iron sulfur protein (ISP)). The electron transfer component is composed of a ferredoxin reductase (NagAa) and a ferredoxin (NagAb), and the dioxygenase component is formed by a large alpha subunit (NagAc) and a small beta subunit (NagAd).

The protein operates within aromatic compound metabolism; naphthalene degradation. Functionally, component of the naphthalene dioxygenase (NDO) multicomponent enzyme system which catalyzes the incorporation of both atoms of molecular oxygen into naphthalene to form cis-(1R,2S)-dihydroxy-1,2-dihydronaphthalene. Also able to use styrene as substrate. The beta subunit seems to have a structural role in the holoenzyme. This chain is Naphthalene 1,2-dioxygenase system, small oxygenase component, found in Ralstonia sp.